The primary structure comprises 466 residues: Vimentin (466 aa).

Residues 1 to 13 show a composition bias toward low complexity; it reads MSTRSVSSSSYRR. The tract at residues 1 to 32 is disordered; it reads MSTRSVSSSSYRRMFGGPGTGSRPSSTRSYVT. Ser-2 carries the post-translational modification N-acetylserine. A head region spans residues 2–95; it reads STRSVSSSSY…FSLADAINTE (94 aa). A phosphoserine mark is found at Ser-5, Ser-7, Ser-8, Ser-9, and Ser-10. Ser-7 carries O-linked (GlcNAc) serine; alternate glycosylation. Position 20 is a phosphothreonine (Thr-20). Residues 21-32 show a composition bias toward low complexity; it reads GSRPSSTRSYVT. 2 positions are modified to phosphoserine: Ser-25 and Ser-26. A glycan (O-linked (GlcNAc) threonine) is linked at Thr-33. A phosphoserine mark is found at Ser-34, Ser-39, Ser-42, Ser-47, Ser-49, and Ser-51. Ser-34 carries an O-linked (GlcNAc) serine; alternate glycan. Tyr-53 carries the phosphotyrosine modification. Phosphoserine occurs at positions 55 and 56. Residue Tyr-61 is modified to Phosphotyrosine. 5 positions are modified to phosphoserine: Ser-66, Ser-72, Ser-73, Ser-83, and Ser-87. The interval 96-131 is coil 1A; sequence FKNTRTNEKVELQELNDRFANYIDKVRFLEQQNKIL. Residues 96–131 adopt a coiled-coil conformation; that stretch reads FKNTRTNEKVELQELNDRFANYIDKVRFLEQQNKIL. Residues 103 to 411 form the IF rod domain; the sequence is EKVELQELND…KLLEGEESRI (309 aa). Lys-104 participates in a covalent cross-link: Glycyl lysine isopeptide (Lys-Gly) (interchain with G-Cter in SUMO2). At Tyr-117 the chain carries Phosphotyrosine. Lys-120, Lys-129, and Lys-139 each carry N6-acetyllysine; alternate. 2 positions are modified to N6-succinyllysine; alternate: Lys-120 and Lys-129. Glycyl lysine isopeptide (Lys-Gly) (interchain with G-Cter in SUMO2); alternate cross-links involve residues Lys-120, Lys-129, and Lys-139. A linker 1 region spans residues 132–153; that stretch reads LAELEQLKGQGKSRLGDLYEEE. Residue Ser-144 is modified to Phosphoserine. Residues 154–245 are a coiled coil; that stretch reads MRELRRQVDQ…KLHDEEIQEL (92 aa). The tract at residues 154–245 is coil 1B; the sequence is MRELRRQVDQ…KLHDEEIQEL (92 aa). Lys-168 is subject to N6-acetyllysine. Lys-188 is subject to N6-acetyllysine; alternate. Residue Lys-188 is modified to N6-succinyllysine; alternate. Ser-214 bears the Phosphoserine mark. An N6-acetyllysine; alternate modification is found at Lys-223. A Glycyl lysine isopeptide (Lys-Gly) (interchain with G-Cter in SUMO2); alternate cross-link involves residue Lys-223. Ser-226 is modified (phosphoserine). Lys-235 is subject to N6-acetyllysine. The segment at 246 to 268 is linker 12; it reads QAQIQDQHVQIDMDVSKPDLTAA. Lys-262 is covalently cross-linked (Glycyl lysine isopeptide (Lys-Gly) (interchain with G-Cter in SUMO2)). A coil 2 region spans residues 269-407; sequence LRDVRQQYES…ATYRKLLEGE (139 aa). At Lys-294 the chain carries N6-acetyllysine; alternate. Lys-294 carries the N6-succinyllysine; alternate modification. Lys-294 participates in a covalent cross-link: Glycyl lysine isopeptide (Lys-Gly) (interchain with G-Cter in SUMO2); alternate. Ser-299 is subject to Phosphoserine. Residues 303 to 407 are a coiled coil; that stretch reads NRNNDALRQA…ATYRKLLEGE (105 aa). A Glycyl lysine isopeptide (Lys-Gly) (interchain with G-Cter in SUMO2) cross-link involves residue Lys-313. Position 325 is a phosphoserine (Ser-325). The short motif at 326-329 is the [IL]-x-C-x-x-[DE] motif element; the sequence is LTCE. An N6-acetyllysine; alternate modification is found at Lys-373. Lys-373 is covalently cross-linked (Glycyl lysine isopeptide (Lys-Gly) (interchain with G-Cter in SUMO2); alternate). The tail stretch occupies residues 408–466; sequence ESRIALPLPNFSSLNLRETNLDSLPLVDTHSKRTLLIKTVETRDGQVINETSQHHDDLE. A phosphoserine mark is found at Ser-409, Ser-419, and Ser-420. Phosphothreonine is present on Thr-426. Residue Ser-430 is modified to Phosphoserine. The residue at position 436 (Thr-436) is a Phosphothreonine. A Phosphoserine modification is found at Ser-438. Lys-439 participates in a covalent cross-link: Glycyl lysine isopeptide (Lys-Gly) (interchain with G-Cter in SUMO2). Lys-445 carries the N6-acetyllysine; alternate modification. Residue Lys-445 is modified to N6-succinyllysine; alternate. Residue Lys-445 forms a Glycyl lysine isopeptide (Lys-Gly) (interchain with G-Cter in SUMO2); alternate linkage. A Glycyl lysine isopeptide (Lys-Gly) (interchain with G-Cter in SUMO1); alternate cross-link involves residue Lys-445. A phosphothreonine mark is found at Thr-446 and Thr-458. At Ser-459 the chain carries Phosphoserine.

This sequence belongs to the intermediate filament family. As to quaternary structure, homomer assembled from elementary dimers. Identified in complexes that contain VIM, EZR, AHNAK, BFSP1, BFSP2, ANK2, PLEC, PRX and spectrin. Interacts with BCAS3. Interacts with LGSN. Interacts with SYNM. Interacts (via rod region) with PLEC (via CH 1 domain). Interacts with STK33. Interacts with LARP6. Interacts with RAB8B. Interacts with TOR1A; the interaction associates TOR1A with the cytoskeleton. Interacts with TOR1AIP1. Interacts with TOR1AIP1. Interacts with DIAPH1. Interacts with EPPK1; interaction is dependent of higher-order structure of intermediate filament. Interacts with the non-receptor tyrosine kinase SRMS; the interaction leads to phosphorylation of VIM. Interacts with NOD2. Interacts (via head region) with CORO1C. Interacts with HDGF. Interacts with PRKCE (via phorbol-ester/DAG-type 2 domain). Interacts with BFSP2. Interacts with PPL. Interacts with PKP1 and PKP2. Interacts with SCRIB (via PDZ domains); the interaction protects SCRIB from proteasomal degradation and facilitates SCRIB localization to intermediate filaments, the interaction is reduced by cell contact inhibition. In terms of processing, filament disassembly during mitosis is promoted by phosphorylation at Ser-55 as well as by nestin. One of the most prominent phosphoproteins in various cells of mesenchymal origin. Phosphorylation is enhanced during cell division, at which time vimentin filaments are significantly reorganized. Phosphorylation by PKN1 inhibits the formation of filaments. Phosphorylated at Ser-56 by CDK5 during neutrophil secretion in the cytoplasm. Phosphorylated by STK33. Phosphorylated on tyrosine residues by SRMS. O-glycosylated during cytokinesis at sites identical or close to phosphorylation sites, this interferes with the phosphorylation status. Post-translationally, S-nitrosylation is induced by interferon-gamma and oxidatively-modified low-densitity lipoprotein (LDL(ox)) possibly implicating the iNOS-S100A8/9 transnitrosylase complex.

It is found in the cytoplasm. Its subcellular location is the cytoskeleton. The protein resides in the nucleus matrix. It localises to the cell membrane. Its function is as follows. Vimentins are class-III intermediate filaments found in various non-epithelial cells, especially mesenchymal cells. Vimentin is attached to the nucleus, endoplasmic reticulum, and mitochondria, either laterally or terminally. Plays a role in cell directional movement, orientation, cell sheet organization and Golgi complex polarization at the cell migration front. Protects SCRIB from proteasomal degradation and facilitates its localization to intermediate filaments in a cell contact-mediated manner. In terms of biological role, involved with LARP6 in the stabilization of type I collagen mRNAs for CO1A1 and CO1A2. The polypeptide is Vimentin (VIM) (Canis lupus familiaris (Dog)).